The primary structure comprises 617 residues: Chaperone protein DnaK (617 aa).

Phosphothreonine; by autocatalysis is present on Thr-175. The segment covering 578–592 (AGAEAQQGAQGTQGA) has biased composition (low complexity). A disordered region spans residues 578–617 (AGAEAQQGAQGTQGADMGGNAQGKDDDNVVDADFKVEDDK). Positions 600-617 (GKDDDNVVDADFKVEDDK) are enriched in basic and acidic residues.

This sequence belongs to the heat shock protein 70 family.

Functionally, acts as a chaperone. The chain is Chaperone protein DnaK from Clostridium novyi (strain NT).